The sequence spans 399 residues: Acetate kinase (399 aa).

Asn-8 is a Mg(2+) binding site. An ATP-binding site is contributed by Lys-15. Arg-89 is a binding site for substrate. The active-site Proton donor/acceptor is Asp-146. Residues 206-210 (HVGNG), 283-285 (DMR), and 331-335 (GMGEN) contribute to the ATP site. Glu-383 is a binding site for Mg(2+).

The protein belongs to the acetokinase family. In terms of assembly, homodimer. Mg(2+) serves as cofactor. Mn(2+) is required as a cofactor.

It is found in the cytoplasm. The catalysed reaction is acetate + ATP = acetyl phosphate + ADP. It functions in the pathway metabolic intermediate biosynthesis; acetyl-CoA biosynthesis; acetyl-CoA from acetate: step 1/2. Functionally, catalyzes the formation of acetyl phosphate from acetate and ATP. Can also catalyze the reverse reaction. The protein is Acetate kinase of Streptococcus equi subsp. zooepidemicus (strain H70).